A 184-amino-acid chain; its full sequence is UPF0398 protein BCG9842_B3730 (184 aa).

It belongs to the UPF0398 family.

This Bacillus cereus (strain G9842) protein is UPF0398 protein BCG9842_B3730.